A 694-amino-acid polypeptide reads, in one-letter code: Elongation factor G (694 aa).

One can recognise a tr-type G domain in the interval 6–288 (KLYRNIGIAA…GVIEYLPSPT (283 aa)). Residues 15–22 (AHVDAGKT), 86–90 (DTPGH), and 140–143 (NKMD) each bind GTP.

It belongs to the TRAFAC class translation factor GTPase superfamily. Classic translation factor GTPase family. EF-G/EF-2 subfamily.

The protein resides in the cytoplasm. Catalyzes the GTP-dependent ribosomal translocation step during translation elongation. During this step, the ribosome changes from the pre-translocational (PRE) to the post-translocational (POST) state as the newly formed A-site-bound peptidyl-tRNA and P-site-bound deacylated tRNA move to the P and E sites, respectively. Catalyzes the coordinated movement of the two tRNA molecules, the mRNA and conformational changes in the ribosome. This is Elongation factor G from Legionella pneumophila (strain Paris).